We begin with the raw amino-acid sequence, 235 residues long: UPF0502 protein Bcep18194_B0081 (235 aa).

It belongs to the UPF0502 family.

The chain is UPF0502 protein Bcep18194_B0081 from Burkholderia lata (strain ATCC 17760 / DSM 23089 / LMG 22485 / NCIMB 9086 / R18194 / 383).